Here is a 192-residue protein sequence, read N- to C-terminus: Protein GrpE (192 aa).

This sequence belongs to the GrpE family. As to quaternary structure, homodimer.

The protein resides in the cytoplasm. Functionally, participates actively in the response to hyperosmotic and heat shock by preventing the aggregation of stress-denatured proteins, in association with DnaK and GrpE. It is the nucleotide exchange factor for DnaK and may function as a thermosensor. Unfolded proteins bind initially to DnaJ; upon interaction with the DnaJ-bound protein, DnaK hydrolyzes its bound ATP, resulting in the formation of a stable complex. GrpE releases ADP from DnaK; ATP binding to DnaK triggers the release of the substrate protein, thus completing the reaction cycle. Several rounds of ATP-dependent interactions between DnaJ, DnaK and GrpE are required for fully efficient folding. This is Protein GrpE from Neisseria gonorrhoeae (strain ATCC 700825 / FA 1090).